Reading from the N-terminus, the 430-residue chain is Glutamate-1-semialdehyde 2,1-aminomutase (430 aa).

At K265 the chain carries N6-(pyridoxal phosphate)lysine.

It belongs to the class-III pyridoxal-phosphate-dependent aminotransferase family. HemL subfamily. As to quaternary structure, homodimer. Requires pyridoxal 5'-phosphate as cofactor.

It localises to the cytoplasm. It carries out the reaction (S)-4-amino-5-oxopentanoate = 5-aminolevulinate. The protein operates within porphyrin-containing compound metabolism; protoporphyrin-IX biosynthesis; 5-aminolevulinate from L-glutamyl-tRNA(Glu): step 2/2. This is Glutamate-1-semialdehyde 2,1-aminomutase from Helicobacter pylori (strain Shi470).